A 265-amino-acid chain; its full sequence is Serine protease ami (265 aa).

The first 21 residues, 1–21 (MNVSWALLAVVLVLTVATYEC), serve as a signal peptide directing secretion. A glycan (N-linked (GlcNAc...) asparagine) is linked at asparagine 2. Residues 22–26 (RPRGR) constitute a propeptide, activation peptide. In terms of domain architecture, Peptidase S1 spans 27–254 (ILGGQDSKAE…YKSWIMESMY (228 aa)). A disulfide bridge connects residues cysteine 52 and cysteine 68. Histidine 67 serves as the catalytic Charge relay system. N-linked (GlcNAc...) asparagine glycosylation is found at asparagine 71, asparagine 74, and asparagine 108. Catalysis depends on aspartate 115, which acts as the Charge relay system. 3 disulfide bridges follow: cysteine 149–cysteine 215, cysteine 180–cysteine 196, and cysteine 205–cysteine 230. Serine 209 serves as the catalytic Charge relay system. Residue asparagine 255 is glycosylated (N-linked (GlcNAc...) asparagine).

This sequence belongs to the peptidase S1 family.

The protein localises to the secreted. Probable serine protease. This Xenopus tropicalis (Western clawed frog) protein is Serine protease ami.